A 218-amino-acid chain; its full sequence is MKIFLDTANLEEIKKGVEWGIVDGVTTNPTLISKEGAEFKQRVKEICDLVKGPVSAEVVSLDYEGMVREARELAQLSEYVVIKIPMTPDGIRAVKTLSAEGIKTNVTLVFSPAQAILAAKAGATYVSPFIGRMDDLSNDGMRMLGEIVEIYDNYGFETEIIAASIRHPMHVVEAALMGVDIVTMPFAVLEKLFKHPMTDLGIERFMNDWKKYLENLKK.

Lys-83 acts as the Schiff-base intermediate with substrate in catalysis.

Belongs to the transaldolase family. Type 3B subfamily.

The protein localises to the cytoplasm. It carries out the reaction D-sedoheptulose 7-phosphate + D-glyceraldehyde 3-phosphate = D-erythrose 4-phosphate + beta-D-fructose 6-phosphate. It functions in the pathway carbohydrate degradation; pentose phosphate pathway; D-glyceraldehyde 3-phosphate and beta-D-fructose 6-phosphate from D-ribose 5-phosphate and D-xylulose 5-phosphate (non-oxidative stage): step 2/3. In terms of biological role, transaldolase is important for the balance of metabolites in the pentose-phosphate pathway. This is Probable transaldolase from Thermotoga petrophila (strain ATCC BAA-488 / DSM 13995 / JCM 10881 / RKU-1).